The chain runs to 416 residues: MVASGGRPDGPPSITPESPLIVGGREWQGMAGSCWNITYVQDSVGPATSTLMFVAGVVGNGLALGILGARRRSHPSAFAVLVTGLAVTDLLGTCFLSPAVFVAYARNSSLLGLAHGGTMLCDTFAFAMTFFGLASTLILFAMAVERCLALSHPYLYAQLDGPRCARLALPAIYAFCCLFCSLPLLGLGEHQQYCPGSWCFIRMRSPQPGGCAFSLAYASLMALLVTSIFFCNGSVTLSLCHMYRQQRRHHGSFVPTSRAREDEVYHLILLALMTGIMAVCSLPLTIRGFTQAIAPDSREMGDLHAFRFNAFNPILDPWVFILFRKAVFQRLKFWLCCLCARSVHGDLQTPLSRPVSGRRDTLAPDSLQAKEGNWVPLSTWGTGQVAPLTAVPLSGGDGCSVGMPSKTEAVVACSLC.

Over 1 to 45 (MVASGGRPDGPPSITPESPLIVGGREWQGMAGSCWNITYVQDSVG) the chain is Extracellular. 2 cysteine pairs are disulfide-bonded: C34/C194 and C121/C199. N36 carries an N-linked (GlcNAc...) asparagine glycan. The chain crosses the membrane as a helical span at residues 46-67 (PATSTLMFVAGVVGNGLALGIL). Topologically, residues 68–80 (GARRRSHPSAFAV) are cytoplasmic. The helical transmembrane segment at 81 to 105 (LVTGLAVTDLLGTCFLSPAVFVAYA) threads the bilayer. The Extracellular segment spans residues 106–123 (RNSSLLGLAHGGTMLCDT). The chain crosses the membrane as a helical span at residues 124–144 (FAFAMTFFGLASTLILFAMAV). At 145–163 (ERCLALSHPYLYAQLDGPR) the chain is on the cytoplasmic side. A helical transmembrane segment spans residues 164–187 (CARLALPAIYAFCCLFCSLPLLGL). Over 188–215 (GEHQQYCPGSWCFIRMRSPQPGGCAFSL) the chain is Extracellular. A helical transmembrane segment spans residues 216–237 (AYASLMALLVTSIFFCNGSVTL). Topologically, residues 238–264 (SLCHMYRQQRRHHGSFVPTSRAREDEV) are cytoplasmic. A helical transmembrane segment spans residues 265-289 (YHLILLALMTGIMAVCSLPLTIRGF). The Extracellular segment spans residues 290–302 (TQAIAPDSREMGD). Residues 303 to 323 (LHAFRFNAFNPILDPWVFILF) form a helical membrane-spanning segment. At 324-416 (RKAVFQRLKF…TEAVVACSLC (93 aa)) the chain is on the cytoplasmic side. A Phosphoserine modification is found at S366. C413 is modified (cysteine methyl ester). C413 carries S-farnesyl cysteine lipidation. Residues 414 to 416 (SLC) constitute a propeptide, removed in mature form.

This sequence belongs to the G-protein coupled receptor 1 family. As to quaternary structure, interacts (non-isoprenylated C-terminus) with PDZK1. In terms of processing, isoprenylation does not influence ligand binding but is required for efficient coupling to the effectors adenylyl cyclase and phospholipase C.

Its subcellular location is the cell membrane. In terms of biological role, receptor for prostacyclin (prostaglandin I2 or PGI2). The activity of this receptor is mediated by G(s) proteins which activate adenylate cyclase. In Rattus norvegicus (Rat), this protein is Prostacyclin receptor (Ptgir).